Here is a 51-residue protein sequence, read N- to C-terminus: Large ribosomal subunit protein eL39x (51 aa).

This sequence belongs to the eukaryotic ribosomal protein eL39 family.

The polypeptide is Large ribosomal subunit protein eL39x (RPL39C) (Oryza sativa subsp. japonica (Rice)).